The primary structure comprises 1006 residues: Kinesin-like protein KIN-5C (1006 aa).

In terms of domain architecture, Kinesin motor spans 9-355 (NVQVLLRCRP…LDYAHRAKNI (347 aa)). Position 95–102 (95–102 (GQTGTGKT)) interacts with ATP. Positions 371-522 (IKDLYGEIER…NASLFQKIAR (152 aa)) form a coiled coil.

Belongs to the TRAFAC class myosin-kinesin ATPase superfamily. Kinesin family. KIN-5/BimC subfamily.

It is found in the cytoplasm. It localises to the cytoskeleton. Its subcellular location is the spindle. Functionally, responsible for microtubule translocation. May be important for the organization of phragmoplast-specific arrays of microtubules. Plays an essential role in stabilizing the mitotic spindle. Required during mitotic cytokinesis. The chain is Kinesin-like protein KIN-5C from Nicotiana tabacum (Common tobacco).